The chain runs to 566 residues: Urease subunit alpha 2 (566 aa).

Residues 128-566 form the Urease domain; that stretch reads GGVDTHIHFI…LPMAQRYFLF (439 aa). H133, H135, and K216 together coordinate Ni(2+). The residue at position 216 (K216) is an N6-carboxylysine. H218 contributes to the substrate binding site. The Ni(2+) site is built by H245 and H271. Residue H319 is the Proton donor of the active site. D359 contacts Ni(2+).

This sequence belongs to the metallo-dependent hydrolases superfamily. Urease alpha subunit family. In terms of assembly, may form a heterohexamer of 3 UreC (alpha) and 3 UreAB (gamma/beta) subunits. May also form a heterotrimer of UreA (gamma), UreB (beta) and UreC (alpha) subunits. Three heterotrimers associate to form the active enzyme. Ni cation serves as cofactor. In terms of processing, carboxylation allows a single lysine to coordinate two nickel ions.

The protein resides in the cytoplasm. It catalyses the reaction urea + 2 H2O + H(+) = hydrogencarbonate + 2 NH4(+). Its pathway is nitrogen metabolism; urea degradation; CO(2) and NH(3) from urea (urease route): step 1/1. This is Urease subunit alpha 2 from Pseudomonas syringae pv. syringae (strain B728a).